A 288-amino-acid polypeptide reads, in one-letter code: Bifunctional protein FolD (288 aa).

NADP(+)-binding positions include glycine 166–serine 168 and isoleucine 232.

The protein belongs to the tetrahydrofolate dehydrogenase/cyclohydrolase family. In terms of assembly, homodimer.

The catalysed reaction is (6R)-5,10-methylene-5,6,7,8-tetrahydrofolate + NADP(+) = (6R)-5,10-methenyltetrahydrofolate + NADPH. The enzyme catalyses (6R)-5,10-methenyltetrahydrofolate + H2O = (6R)-10-formyltetrahydrofolate + H(+). It participates in one-carbon metabolism; tetrahydrofolate interconversion. Its function is as follows. Catalyzes the oxidation of 5,10-methylenetetrahydrofolate to 5,10-methenyltetrahydrofolate and then the hydrolysis of 5,10-methenyltetrahydrofolate to 10-formyltetrahydrofolate. This is Bifunctional protein FolD from Salmonella enteritidis PT4 (strain P125109).